The following is a 118-amino-acid chain: Autophagy-related protein 8 (118 aa).

A lipid anchor (Phosphatidylethanolamine amidated glycine) is attached at Gly116. Positions 117–118 (SI) are cleaved as a propeptide — removed in mature form.

Belongs to the ATG8 family. In terms of assembly, conjugation to phosphatidylethanolamine (PE) leads to homodimerization. Interacts with ATG1, ATG3, ATG4, ATG7 and ATG12. In terms of processing, the C-terminal Ser-117 and Ile-118 residues of ATG8 are removed by ATG4 to expose Gly-116 at the C-terminus. This Gly-116 forms then a thioester bond with ATG7 (E1-like activating enzyme) before being transferred to ATG3 (the specific E2 conjugating enzyme), in order to be finally amidated with phosphatidylethanolamine. This lipid modification anchors ATG8 to membranes and can be reversed by ATG4, releasing soluble ATG8.

Its subcellular location is the cytoplasmic vesicle. The protein localises to the cvt vesicle membrane. It is found in the autophagosome membrane. The protein resides in the vacuole membrane. Its function is as follows. Ubiquitin-like modifier involved in cytoplasm to vacuole transport (Cvt) vesicles and autophagosome formation. With ATG4, mediates the delivery of the vesicles and autophagosomes to the vacuole via the microtubule cytoskeleton. Required for selective autophagic degradation of the nucleus (nucleophagy) as well as for mitophagy which contributes to regulate mitochondrial quantity and quality by eliminating the mitochondria to a basal level to fulfill cellular energy requirements and preventing excess ROS production. Also participates in membrane fusion events that take place in the early secretory pathway. Also involved in endoplasmic reticulum-specific autophagic process and is essential for the survival of cells subjected to severe ER stress. The ATG8-PE conjugate mediates tethering between adjacent membranes and stimulates membrane hemifusion, leading to expansion of the autophagosomal membrane during autophagy. Moreover not only conjugation, but also subsequent ATG8-PE deconjugation is an important step required to facilitate multiple events during macroautophagy, and especially for efficient autophagosome biogenesis, the assembly of ATG9-containing tubulovesicular clusters into phagophores/autophagosomes, and for the disassembly of PAS-associated ATG components. Contributes to conidiation by regulating the conidial levels of the conidiation-related protein CP15 and mediates fungal oxidation resistance by controlling total superoxide dismutase (SOD) activity. The polypeptide is Autophagy-related protein 8 (Beauveria bassiana (strain ARSEF 2860) (White muscardine disease fungus)).